The primary structure comprises 128 residues: Holo-[acyl-carrier-protein] synthase (128 aa).

Residues Asp8 and Glu57 each coordinate Mg(2+).

The protein belongs to the P-Pant transferase superfamily. AcpS family. Mg(2+) is required as a cofactor.

It localises to the cytoplasm. It catalyses the reaction apo-[ACP] + CoA = holo-[ACP] + adenosine 3',5'-bisphosphate + H(+). In terms of biological role, transfers the 4'-phosphopantetheine moiety from coenzyme A to a Ser of acyl-carrier-protein. The sequence is that of Holo-[acyl-carrier-protein] synthase from Syntrophus aciditrophicus (strain SB).